The primary structure comprises 378 residues: tRNA-specific 2-thiouridylase MnmA (378 aa).

ATP-binding positions include 6-13 and Leu-32; that span reads AMSGGVDS. Cys-101 (nucleophile) is an active-site residue. Cys-101 and Cys-199 form a disulfide bridge. Gly-125 contacts ATP. The interval 148–150 is interaction with tRNA; the sequence is KDQ. Cys-199 (cysteine persulfide intermediate) is an active-site residue.

It belongs to the MnmA/TRMU family.

Its subcellular location is the cytoplasm. The enzyme catalyses S-sulfanyl-L-cysteinyl-[protein] + uridine(34) in tRNA + AH2 + ATP = 2-thiouridine(34) in tRNA + L-cysteinyl-[protein] + A + AMP + diphosphate + H(+). In terms of biological role, catalyzes the 2-thiolation of uridine at the wobble position (U34) of tRNA, leading to the formation of s(2)U34. The sequence is that of tRNA-specific 2-thiouridylase MnmA from Renibacterium salmoninarum (strain ATCC 33209 / DSM 20767 / JCM 11484 / NBRC 15589 / NCIMB 2235).